The following is a 364-amino-acid chain: Peptidyl-prolyl cis-trans isomerase D (364 aa).

One can recognise a PPIase cyclophilin-type domain in the interval 7–170 (YFDITIGNKP…EDAVIAKCGE (164 aa)). TPR repeat units lie at residues 208–241 (ATHL…LNEK), 261–294 (IPCY…DSKY), and 301–334 (TKAY…DPED).

This sequence belongs to the cyclophilin-type PPIase family. PPIase D subfamily.

Its subcellular location is the cytoplasm. The enzyme catalyses [protein]-peptidylproline (omega=180) = [protein]-peptidylproline (omega=0). In terms of biological role, PPIases accelerate the folding of proteins. It catalyzes the cis-trans isomerization of proline imidic peptide bonds in oligopeptides. The polypeptide is Peptidyl-prolyl cis-trans isomerase D (cyp12) (Rhizopus delemar (strain RA 99-880 / ATCC MYA-4621 / FGSC 9543 / NRRL 43880) (Mucormycosis agent)).